The sequence spans 1058 residues: Protein translocase subunit SECA2, chloroplastic (1058 aa).

The N-terminal 58 residues, 1–58, are a transit peptide targeting the chloroplast; the sequence is MGSVSNLVSPNICHPAPPCLTSRSNKFPWTKPISGLLFYRSVTPIKRCHLVRRSCVVS. An ATP-binding site is contributed by 167–174; that stretch reads MKTGEGKT.

This sequence belongs to the SecA family. Part of a second Sec protein translocation apparatus. Interacts probably with SCY2.

The protein resides in the plastid. It is found in the chloroplast membrane. The enzyme catalyses ATP + H2O + chloroplast-proteinSide 1 = ADP + phosphate + chloroplast-proteinSide 2.. In terms of biological role, involved in protein export. Probably interacts with other proteins to allow the postimport or conservative sorting pathway for inner membrane proteins in plastids. May have a central role in coupling the hydrolysis of ATP to the transfer of proteins across the membrane. The polypeptide is Protein translocase subunit SECA2, chloroplastic (Arabidopsis thaliana (Mouse-ear cress)).